Reading from the N-terminus, the 414-residue chain is Eukaryotic initiation factor 4A (414 aa).

The Q motif signature appears at 41–69; it reads ESFDDMGLQENLLRGIYAYGFEKPSAIQQ. The 171-residue stretch at 72–242 folds into the Helicase ATP-binding domain; that stretch reads IVPFCKGLDV…RKFMNKPVRI (171 aa). Residue 85 to 92 coordinates ATP; that stretch reads AQSGTGKT. A DEAD box motif is present at residues 190–193; sequence DEAD. Positions 253-414 constitute a Helicase C-terminal domain; the sequence is GIKQFYVNVE…ELPANVADLL (162 aa).

Belongs to the DEAD box helicase family. eIF4A subfamily. In terms of assembly, eIF4F is a multi-subunit complex, the composition of which varies with external and internal environmental conditions. It is composed of at least EIF4A, EIF4E and EIF4G.

It carries out the reaction ATP + H2O = ADP + phosphate + H(+). Functionally, ATP-dependent RNA helicase which is a subunit of the eIF4F complex involved in cap recognition and is required for mRNA binding to ribosome. In the current model of translation initiation, eIF4A unwinds RNA secondary structures in the 5'-UTR of mRNAs which is necessary to allow efficient binding of the small ribosomal subunit, and subsequent scanning for the initiator codon. This chain is Eukaryotic initiation factor 4A, found in Triticum aestivum (Wheat).